Reading from the N-terminus, the 293-residue chain is 33 kDa chaperonin (293 aa).

Intrachain disulfides connect C238-C240 and C271-C274.

This sequence belongs to the HSP33 family. In terms of processing, under oxidizing conditions two disulfide bonds are formed involving the reactive cysteines. Under reducing conditions zinc is bound to the reactive cysteines and the protein is inactive.

It is found in the cytoplasm. Functionally, redox regulated molecular chaperone. Protects both thermally unfolding and oxidatively damaged proteins from irreversible aggregation. Plays an important role in the bacterial defense system toward oxidative stress. This chain is 33 kDa chaperonin, found in Staphylococcus aureus (strain USA300).